We begin with the raw amino-acid sequence, 205 residues long: Large ribosomal subunit protein bL21m (205 aa).

The N-terminal 39 residues, 1 to 39 (MAASSLTVTLGRLASACSHSILRPSGPGAASLWSASRRF), are a transit peptide targeting the mitochondrion.

The protein belongs to the bacterial ribosomal protein bL21 family. As to quaternary structure, component of the mitochondrial large ribosomal subunit (mt-LSU). Mature mammalian 55S mitochondrial ribosomes consist of a small (28S) and a large (39S) subunit. The 28S small subunit contains a 12S ribosomal RNA (12S mt-rRNA) and 30 different proteins. The 39S large subunit contains a 16S rRNA (16S mt-rRNA), a copy of mitochondrial valine transfer RNA (mt-tRNA(Val)), which plays an integral structural role, and 52 different proteins.

It localises to the mitochondrion. In Homo sapiens (Human), this protein is Large ribosomal subunit protein bL21m (MRPL21).